A 145-amino-acid polypeptide reads, in one-letter code: Alpha-amylase/trypsin inhibitor CM1 (145 aa).

The N-terminal stretch at 1–25 is a signal peptide; it reads MASKSSISPLLLATVLVSVFAAATA.

The protein belongs to the protease inhibitor I6 (cereal trypsin/alpha-amylase inhibitor) family. As to quaternary structure, subunit of the tetrameric inhibitor. In terms of tissue distribution, endosperm.

The protein resides in the secreted. Its function is as follows. Alpha-amylase/trypsin inhibitor. It could be involved in insect defense mechanisms. The polypeptide is Alpha-amylase/trypsin inhibitor CM1 (Triticum aestivum (Wheat)).